Consider the following 473-residue polypeptide: TOX high mobility group box family member 2 (473 aa).

4 disordered regions span residues 1 to 42 (MSDG…SLLH), 139 to 211 (GLRS…VSAY), 277 to 302 (SKSP…PPKQ), and 340 to 473 (LLPG…PSAR). Residues 8–20 (LLSTSQTYNSQGE) are compositionally biased toward polar residues. Positions 25–63 (YEIPPITPPNLPEPSLLHLGDHEAGYHSLCHGLAPNGLL) are required for transcriptional activation. Residues 153–164 (GSKSATPSPSSS) are compositionally biased toward low complexity. Basic and acidic residues predominate over residues 171 to 188 (DAHFKISGEKRPSTDPGK). Positions 172–201 (AHFKISGEKRPSTDPGKKAKNPKKKKKKDP) match the Nuclear localization signal motif. Positions 189–199 (KAKNPKKKKKK) are enriched in basic residues. The HMG box DNA-binding region spans 204–272 (PQKPVSAYAL…EYLKALAAYR (69 aa)). Low complexity-rich tracts occupy residues 373–382 (LLSPPLSMSP) and 415–440 (SDFP…WDGS). A compositionally biased stretch (polar residues) spans 463–473 (SPKNLQEPSAR).

As to expression, highly expressed in ovary, where it is restricted to undifferentiated granulosa cells. Expressed in hypothalamus, pituitary gland, testis and uterus.

The protein resides in the nucleus. Its function is as follows. Putative transcriptional activator involved in the hypothalamo-pituitary-gonadal system. The protein is TOX high mobility group box family member 2 (Tox2) of Rattus norvegicus (Rat).